Consider the following 340-residue polypeptide: Armadillo repeat-containing protein 12 (340 aa).

Residues 1 to 101 form an interaction with TBC1D15 region; the sequence is MGKTIPRFLE…NITRCVYLLE (101 aa). 3 ARM repeats span residues 100–139, 179–218, and 278–318; these read LEAE…AFSG, LPDY…YLAQ, and SLHE…SLQC. Positions 321-340 are disordered; it reads DLGSRPSSCRPSHSCFKTGK. Positions 324–340 are enriched in low complexity; the sequence is SRPSSCRPSHSCFKTGK.

Interacts with TBC1D15, TBC1D21, GK2 and IMMT. Interacts with VDAC2 and VDAC3 in a TBC1D21-dependent manner. Interacts (via ARM domains) with RBBP4. Testis-specific.

It is found in the nucleus. The protein localises to the mitochondrion outer membrane. Essential for male fertility and sperm mitochondrial sheath formation. Required for proper mitochondrial elongation and coiling along the flagellum during the formation of the mitochondrial sheath. Facilitates the growth and aggressiveness of neuroblastoma cells. Increases the EZH2 activity and H3K27me3 levels in a RBBP4-dependent manner, and facilitates the enrichment of polycomb repressive complex 2 and H3K27me3 on gene promoters, resulting in transcriptional repression of tumor suppressors affecting the proliferation, invasion, and metastasis of tumor cells. The protein is Armadillo repeat-containing protein 12 (Armc12) of Mus musculus (Mouse).